A 360-amino-acid chain; its full sequence is Peptide chain release factor 1 (360 aa).

Position 236 is an N5-methylglutamine (Gln236).

It belongs to the prokaryotic/mitochondrial release factor family. In terms of processing, methylated by PrmC. Methylation increases the termination efficiency of RF1.

The protein resides in the cytoplasm. In terms of biological role, peptide chain release factor 1 directs the termination of translation in response to the peptide chain termination codons UAG and UAA. The protein is Peptide chain release factor 1 of Lactiplantibacillus plantarum (strain ATCC BAA-793 / NCIMB 8826 / WCFS1) (Lactobacillus plantarum).